The primary structure comprises 341 residues: UDP-N-acetylenolpyruvoylglucosamine reductase (341 aa).

The region spanning 15–185 (VTQSCLSLIE…TAVGLRLPKT (171 aa)) is the FAD-binding PCMH-type domain. The active site involves Arg161. Residue Ser231 is the Proton donor of the active site. The active site involves Glu327.

It belongs to the MurB family. It depends on FAD as a cofactor.

Its subcellular location is the cytoplasm. The enzyme catalyses UDP-N-acetyl-alpha-D-muramate + NADP(+) = UDP-N-acetyl-3-O-(1-carboxyvinyl)-alpha-D-glucosamine + NADPH + H(+). Its pathway is cell wall biogenesis; peptidoglycan biosynthesis. In terms of biological role, cell wall formation. The protein is UDP-N-acetylenolpyruvoylglucosamine reductase of Shewanella oneidensis (strain ATCC 700550 / JCM 31522 / CIP 106686 / LMG 19005 / NCIMB 14063 / MR-1).